The chain runs to 412 residues: Serine hydroxymethyltransferase (412 aa).

(6S)-5,6,7,8-tetrahydrofolate-binding positions include Leu120 and 124 to 126; that span reads GHL. N6-(pyridoxal phosphate)lysine is present on Lys229. A (6S)-5,6,7,8-tetrahydrofolate-binding site is contributed by 352–354; the sequence is SPF.

Belongs to the SHMT family. As to quaternary structure, homodimer. The cofactor is pyridoxal 5'-phosphate.

Its subcellular location is the cytoplasm. It catalyses the reaction (6R)-5,10-methylene-5,6,7,8-tetrahydrofolate + glycine + H2O = (6S)-5,6,7,8-tetrahydrofolate + L-serine. It participates in one-carbon metabolism; tetrahydrofolate interconversion. Its pathway is amino-acid biosynthesis; glycine biosynthesis; glycine from L-serine: step 1/1. Functionally, catalyzes the reversible interconversion of serine and glycine with tetrahydrofolate (THF) serving as the one-carbon carrier. This reaction serves as the major source of one-carbon groups required for the biosynthesis of purines, thymidylate, methionine, and other important biomolecules. Also exhibits THF-independent aldolase activity toward beta-hydroxyamino acids, producing glycine and aldehydes, via a retro-aldol mechanism. This chain is Serine hydroxymethyltransferase, found in Acetivibrio thermocellus (strain ATCC 27405 / DSM 1237 / JCM 9322 / NBRC 103400 / NCIMB 10682 / NRRL B-4536 / VPI 7372) (Clostridium thermocellum).